A 355-amino-acid polypeptide reads, in one-letter code: Glucose-6-phosphatase 2 (355 aa).

The Lumenal segment spans residues 1–24; sequence MDFLHRNGVLIIQHLQKDYRAYYT. Residues 25–45 traverse the membrane as a helical segment; it reads FLNFMSNVGDPRNIFFIYFPL. Residues 46-56 lie on the Cytoplasmic side of the membrane; that stretch reads CFQFNQTVGTK. Residues 57-77 form a helical membrane-spanning segment; it reads MIWVAVIGDWLNLIFKWILFG. Residues 78–115 lie on the Lumenal side of the membrane; the sequence is HRPYWWVQETQIYPNHSSPCLEQFPTTCETGPGSPSGH. Arg79 serves as a coordination point for substrate. A glycan (N-linked (GlcNAc...) asparagine) is linked at Asn92. Catalysis depends on His115, which acts as the Proton donor. Residues 116-136 form a helical membrane-spanning segment; sequence AMGASCVWYVMVTAALSHTVC. At 137 to 146 the chain is on the cytoplasmic side; that stretch reads GMDKFSITLH. Residues 147–167 form a helical membrane-spanning segment; it reads RLTWSFLWSVFWLIQISVCIS. Position 168 (Arg168) is a topological domain, lumenal. Arg168 is a binding site for substrate. A helical transmembrane segment spans residues 169 to 189; sequence VFIATHFPHQVILGVIGGMLV. The active-site Nucleophile is His174. Over 190–211 the chain is Cytoplasmic; sequence AEAFEHTPGIQTASLGTYLKTN. Residues 212 to 232 form a helical membrane-spanning segment; it reads LFLFLFAVGFYLLLRVLNIDL. At 233-261 the chain is on the lumenal side; it reads LWSVPIAKKWCANPDWIHIDTTPFAGLVR. The helical transmembrane segment at 262–282 threads the bilayer; it reads NLGVLFGLGFAINSEMFLLSC. Residues 283 to 293 are Cytoplasmic-facing; it reads RGGNNYTLSFR. A helical membrane pass occupies residues 294 to 314; it reads LLCALTSLTILQLYHFLQIPT. Over 315–318 the chain is Lumenal; the sequence is HEEH. Residues 319–339 form a helical membrane-spanning segment; sequence LFYVLSFCKSASIPLTVVAFI. Residues 340–355 lie on the Cytoplasmic side of the membrane; the sequence is PYSVHMLMKQSGKKSQ. Residues 352 to 355 carry the Prevents secretion from ER motif; the sequence is KKSQ.

It belongs to the glucose-6-phosphatase family. N-glycosylated; the non-glycosylated form is more unstable and is degraded through the proteasome. Specifically expressed in pancreas and also detected to a lower extent in testis. Expressed by most islet cells in the pancreas (at protein level).

It localises to the endoplasmic reticulum membrane. The enzyme catalyses D-glucose 6-phosphate + H2O = D-glucose + phosphate. It participates in carbohydrate biosynthesis; gluconeogenesis. In terms of biological role, may hydrolyze glucose-6-phosphate to glucose in the endoplasmic reticulum. May be responsible for glucose production through glycogenolysis and gluconeogenesis. This chain is Glucose-6-phosphatase 2 (G6PC2), found in Homo sapiens (Human).